A 266-amino-acid chain; its full sequence is Orcokinin peptides type B (266 aa).

Positions 1–20 are cleaved as a signal peptide; sequence MTAQMFTIALLLSLSAIAAA. 3 propeptides span residues 21-46, 240-246, and 264-266; these read GTIKTAPARTPSTQDDASFPPDGAPV, DYDVFPD, and NVE.

Belongs to the orcokinin family.

The protein localises to the secreted. Its function is as follows. Myotropic peptides that enhance both the frequency and amplitude of spontaneous hindgut contractions. This is Orcokinin peptides type B from Procambarus clarkii (Red swamp crayfish).